Reading from the N-terminus, the 318-residue chain is Very-long-chain 3-oxoacyl-CoA reductase-B (318 aa).

Residues 15–35 (FWYLGVVAATWWGLRAAWCLL) form a helical membrane-spanning segment. 54–83 (GKWAVVTGATDGIGKAYAEELARRGMNIVL) lines the NADP(+) pocket. Transmembrane regions (helical) follow at residues 187-207 (GVVLNISSASGMYPVPLLTVY) and 281-301 (AITGWISTSLVPVSAAISMGM). S194 contacts substrate. Y207 functions as the Proton acceptor in the catalytic mechanism.

It belongs to the short-chain dehydrogenases/reductases (SDR) family. 17-beta-HSD 3 subfamily.

It is found in the endoplasmic reticulum membrane. The enzyme catalyses a very-long-chain (3R)-3-hydroxyacyl-CoA + NADP(+) = a very-long-chain 3-oxoacyl-CoA + NADPH + H(+). It catalyses the reaction 17beta-estradiol + NAD(+) = estrone + NADH + H(+). The catalysed reaction is 17beta-estradiol + NADP(+) = estrone + NADPH + H(+). Its pathway is lipid metabolism; fatty acid biosynthesis. It participates in steroid biosynthesis; estrogen biosynthesis. Functionally, catalyzes the second of the four reactions of the long-chain fatty acids elongation cycle. This endoplasmic reticulum-bound enzymatic process, allows the addition of two carbons to the chain of long- and very long-chain fatty acids/VLCFAs per cycle. This enzyme has a 3-ketoacyl-CoA reductase activity, reducing 3-ketoacyl-CoA to 3-hydroxyacyl-CoA, within each cycle of fatty acid elongation. Thereby, it may participate in the production of VLCFAs of different chain lengths that are involved in multiple biological processes as precursors of membrane lipids and lipid mediators. May also catalyze the transformation of estrone (E1) into estradiol (E2) and play a role in estrogen formation. The sequence is that of Very-long-chain 3-oxoacyl-CoA reductase-B (hsd17b12-b) from Xenopus laevis (African clawed frog).